Reading from the N-terminus, the 272-residue chain is ATP phosphoribosyltransferase regulatory subunit (272 aa).

It belongs to the class-II aminoacyl-tRNA synthetase family. HisZ subfamily. As to quaternary structure, heteromultimer composed of HisG and HisZ subunits.

It localises to the cytoplasm. It functions in the pathway amino-acid biosynthesis; L-histidine biosynthesis; L-histidine from 5-phospho-alpha-D-ribose 1-diphosphate: step 1/9. Its function is as follows. Required for the first step of histidine biosynthesis. May allow the feedback regulation of ATP phosphoribosyltransferase activity by histidine. This is ATP phosphoribosyltransferase regulatory subunit from Staphylococcus aureus (strain MRSA252).